Here is a 106-residue protein sequence, read N- to C-terminus: Ferredoxin-2 (106 aa).

4Fe-4S ferredoxin-type domains lie at 2-29 (YVVTENCIKCKYQDCVEVCPVDCFYEGE) and 30-59 (NFLVINPDECIDCGVCNPECPAEAIAGKWL). [3Fe-4S] cluster is bound by residues Cys-8 and Cys-16. Cys-20, Cys-39, Cys-42, and Cys-45 together coordinate [4Fe-4S] cluster. Cys-49 provides a ligand contact to [3Fe-4S] cluster. The disordered stretch occupies residues 80-106 (ADADDWKDKPDKTGLLSENPGKGTVCH).

[4Fe-4S] cluster serves as cofactor. [3Fe-4S] cluster is required as a cofactor.

Functionally, ferredoxins are iron-sulfur proteins that transfer electrons in a wide variety of metabolic reactions. This chain is Ferredoxin-2, found in Rhodospirillum rubrum.